A 557-amino-acid polypeptide reads, in one-letter code: Probable protein kinase UbiB (557 aa).

Residues S121–A509 form the Protein kinase domain. ATP-binding positions include L127–V135 and K154. Catalysis depends on D289, which acts as the Proton acceptor. 2 helical membrane passes run V506–H526 and V535–L555.

This sequence belongs to the ABC1 family. UbiB subfamily.

The protein localises to the cell inner membrane. It functions in the pathway cofactor biosynthesis; ubiquinone biosynthesis [regulation]. In terms of biological role, is probably a protein kinase regulator of UbiI activity which is involved in aerobic coenzyme Q (ubiquinone) biosynthesis. This Xanthomonas oryzae pv. oryzae (strain MAFF 311018) protein is Probable protein kinase UbiB.